Consider the following 319-residue polypeptide: Lambda-crystallin homolog (319 aa).

Residue Ala2 is modified to N-acetylalanine. Ser3 carries the phosphoserine modification. NAD(+)-binding positions include 16–17, Asp36, Glu97, and Lys102; that span reads VI. Phosphoserine is present on Ser111.

The protein belongs to the 3-hydroxyacyl-CoA dehydrogenase family. Homodimer. As to expression, widely expressed, with highest levels in liver and kidney.

The protein localises to the cytoplasm. It catalyses the reaction L-gulonate + NAD(+) = 3-dehydro-L-gulonate + NADH + H(+). Inhibited by malonate. In terms of biological role, has high L-gulonate 3-dehydrogenase activity. It also exhibits low dehydrogenase activity toward L-3-hydroxybutyrate (HBA) and L-threonate. The chain is Lambda-crystallin homolog (CRYL1) from Homo sapiens (Human).